Reading from the N-terminus, the 286-residue chain is Probable sulfate transport system permease protein cysT (286 aa).

The next 7 helical transmembrane spans lie at 27–47 (PWQL…IALL), 77–97 (TALF…WVLV), 106–126 (IIDA…GLTL), 147–167 (VAFT…PFVV), 196–216 (FWRV…ALAF), 225–245 (SVVI…VLIF), and 257–277 (TIIG…INFI). In terms of domain architecture, ABC transmembrane type-1 spans 71–272 (YVVTLMTALF…ILSISLFLLF (202 aa)).

Belongs to the binding-protein-dependent transport system permease family. CysTW subfamily.

Its subcellular location is the plastid. It localises to the chloroplast membrane. Its function is as follows. Part of the ABC transporter complex cysAWTP (TC 3.A.1.6.1) involved in sulfate/thiosulfate import. Probably responsible for the translocation of the substrate across the membrane. In Chlorokybus atmophyticus (Soil alga), this protein is Probable sulfate transport system permease protein cysT (cysT).